We begin with the raw amino-acid sequence, 369 residues long: Superinfection exclusion protein (369 aa).

The N-terminal stretch at 1–15 (MIALLILSLTCSAST) is a signal peptide.

Belongs to the serpin family. Orthopoxvirus OPG040 subfamily. In terms of assembly, interacts with A56 protein.

The protein resides in the virion membrane. It is found in the host cell membrane. Functionally, prevents cell to cell fusion via its interaction with A56 protein. The A56-K2 complex associates with components of the entry fusion complex (EFC) presumably to avoid superinfection and syncytium formation. The chain is Superinfection exclusion protein (OPG040) from Vaccinia virus (strain Ankara) (VACV).